The primary structure comprises 282 residues: MLEKVFHEKSFADQYTYGAKISELYAETLITESGIAKSHQRPLIILDNACGTGSISSTLQRTLDERNKRSLKLTCGDLSEGMVDYTKQRMQAEGWNNAEAKIVNAQDTGLPSDHYTHVYTAFAFNMFPDYKAALRECLRILQPGGTLATSTWKTANWCTIMKPVIATMPGQLSYPTMDEINTMLNKGWDRESDVRAEFEQAGFDHVNITTVEKQCLLPVQEFGEACKILLPYILSKFWTQEQRDQYEADVPSYLMRYLEREYGKDGLAPMKGVAIIASGRKP.

The protein belongs to the class I-like SAM-binding methyltransferase superfamily. As to expression, specifically expressed in conidia.

It functions in the pathway secondary metabolite biosynthesis. Methyltransferase; part of the gene cluster that mediates the biosynthesis of trypacidin, a mycotoxin with antiprotozoal activity and that plays a role in the infection process. The pathway begins with the synthesis of atrochrysone thioester by the polyketide synthase (PKS) tpcC. The atrochrysone carboxyl ACP thioesterase tpcB then breaks the thioester bond and releases the atrochrysone carboxylic acid from tpcC. The decarboxylase tpcK converts atrochrysone carboxylic acid to atrochrysone which is further reduced into emodin anthrone. The next step is performed by the emodin anthrone oxygenase tpcL that catalyzes the oxidation of emodinanthrone to emodin. Emodin O-methyltransferase encoded by tpcA catalyzes methylation of the 8-hydroxy group of emodin to form questin. Ring cleavage of questin by questin oxidase tpcI leads to desmethylsulochrin via several intermediates including questin epoxide. Another methylation step catalyzed by tpcM leads to the formation of sulochrin which is further converted to monomethylsulfochrin by tpcH. Finally, the tpcJ catalyzes the conversion of monomethylsulfochrin to trypacidin. Trypacidin is toxic for human pulmonary and bronchial epithelial cells by initiating the intracellular formation of nitric oxide (NO) and hydrogen peroxide (H(2)O(2)), thus triggering host necrotic cell death. The trypacidin pathway is also able to produce endocrocin via a distinct route from the endocrocin Enc pathway. This is Methyltransferase tpcH from Aspergillus fumigatus (strain ATCC MYA-4609 / CBS 101355 / FGSC A1100 / Af293) (Neosartorya fumigata).